Here is an 84-residue protein sequence, read N- to C-terminus: Seminal ribonuclease (84 aa).

Intrachain disulfides connect C10-C65, C28-C80, and C35-C42. Residues K11–T15, K36, and R55 each bind substrate.

The protein belongs to the pancreatic ribonuclease family. In terms of assembly, homodimer; disulfide-linked.

It is found in the secreted. It carries out the reaction an [RNA] containing cytidine + H2O = an [RNA]-3'-cytidine-3'-phosphate + a 5'-hydroxy-ribonucleotide-3'-[RNA].. The enzyme catalyses an [RNA] containing uridine + H2O = an [RNA]-3'-uridine-3'-phosphate + a 5'-hydroxy-ribonucleotide-3'-[RNA].. This is Seminal ribonuclease (SRN) from Giraffa camelopardalis (Giraffe).